A 209-amino-acid polypeptide reads, in one-letter code: Dual specificity protein phosphatase 22 (209 aa).

One can recognise a Tyrosine-protein phosphatase domain in the interval 4 to 144; the sequence is GMNKILTGLF…LEDFGKCEVH (141 aa). Cys88 serves as the catalytic Phosphocysteine intermediate. The tract at residues 169 to 192 is disordered; sequence LDKHKQQEAAESQNATSSGRQWNS. Polar residues predominate over residues 177–190; that stretch reads AAESQNATSSGRQW.

This sequence belongs to the protein-tyrosine phosphatase family. Non-receptor class dual specificity subfamily.

Its subcellular location is the cytoplasm. The protein localises to the nucleus. It carries out the reaction O-phospho-L-tyrosyl-[protein] + H2O = L-tyrosyl-[protein] + phosphate. It catalyses the reaction O-phospho-L-seryl-[protein] + H2O = L-seryl-[protein] + phosphate. The catalysed reaction is O-phospho-L-threonyl-[protein] + H2O = L-threonyl-[protein] + phosphate. In terms of biological role, activates the Jnk signaling pathway. Dephosphorylates and deactivates p38 and stress-activated protein kinase/c-Jun N-terminal kinase (SAPK/JNK). The protein is Dual specificity protein phosphatase 22 (dusp22) of Xenopus laevis (African clawed frog).